We begin with the raw amino-acid sequence, 438 residues long: Elongation factor 1-alpha (438 aa).

The tr-type G domain occupies 5–228 (KPHLNLVVIG…ALDSLEPPPK (224 aa)). Residues 14 to 21 (GHVDHGKS) are G1. 14–21 (GHVDHGKS) serves as a coordination point for GTP. Ser-21 contacts Mg(2+). The tract at residues 70 to 74 (GVTIA) is G2. The G3 stretch occupies residues 91–94 (DAPG). Residues 91 to 95 (DAPGH) and 153 to 156 (NKMD) each bind GTP. Positions 153 to 156 (NKMD) are G4. The segment at 194–196 (SAW) is G5.

Belongs to the TRAFAC class translation factor GTPase superfamily. Classic translation factor GTPase family. EF-Tu/EF-1A subfamily.

It localises to the cytoplasm. The catalysed reaction is GTP + H2O = GDP + phosphate + H(+). In terms of biological role, GTP hydrolase that promotes the GTP-dependent binding of aminoacyl-tRNA to the A-site of ribosomes during protein biosynthesis. This chain is Elongation factor 1-alpha, found in Staphylothermus marinus (strain ATCC 43588 / DSM 3639 / JCM 9404 / F1).